The following is a 172-amino-acid chain: Peptidyl-prolyl cis-trans isomerase (172 aa).

The PPIase cyclophilin-type domain occupies 7-170; it reads FFDMTVGGAP…KVVKVADCGQ (164 aa).

Belongs to the cyclophilin-type PPIase family.

The protein resides in the cytoplasm. The catalysed reaction is [protein]-peptidylproline (omega=180) = [protein]-peptidylproline (omega=0). Binds cyclosporin A (CsA). CsA mediates some of its effects via an inhibitory action on PPIase. Its function is as follows. PPIases accelerate the folding of proteins. It catalyzes the cis-trans isomerization of proline imidic peptide bonds in oligopeptides. This is Peptidyl-prolyl cis-trans isomerase (CYP) from Zea mays (Maize).